A 1097-amino-acid polypeptide reads, in one-letter code: DNA-directed RNA polymerase subunit beta (1097 aa).

The interval 1072–1097 (QDINPRRNTPSRPTYESLGTSEYEED) is disordered. Positions 1077–1091 (RRNTPSRPTYESLGT) are enriched in polar residues.

It belongs to the RNA polymerase beta chain family. In terms of assembly, in cyanobacteria the RNAP catalytic core is composed of 2 alpha, 1 beta, 1 beta', 1 gamma and 1 omega subunit. When a sigma factor is associated with the core the holoenzyme is formed, which can initiate transcription.

It catalyses the reaction RNA(n) + a ribonucleoside 5'-triphosphate = RNA(n+1) + diphosphate. DNA-dependent RNA polymerase catalyzes the transcription of DNA into RNA using the four ribonucleoside triphosphates as substrates. The sequence is that of DNA-directed RNA polymerase subunit beta from Prochlorococcus marinus (strain MIT 9301).